A 510-amino-acid chain; its full sequence is Light-independent protochlorophyllide reductase subunit B (510 aa).

Residue D36 coordinates [4Fe-4S] cluster. The Proton donor role is filled by D296. 431–432 provides a ligand contact to substrate; the sequence is GM.

This sequence belongs to the ChlB/BchB/BchZ family. As to quaternary structure, protochlorophyllide reductase is composed of three subunits; ChlL, ChlN and ChlB. Forms a heterotetramer of two ChlB and two ChlN subunits. [4Fe-4S] cluster is required as a cofactor.

Its subcellular location is the plastid. It localises to the chloroplast. The catalysed reaction is chlorophyllide a + oxidized 2[4Fe-4S]-[ferredoxin] + 2 ADP + 2 phosphate = protochlorophyllide a + reduced 2[4Fe-4S]-[ferredoxin] + 2 ATP + 2 H2O. It functions in the pathway porphyrin-containing compound metabolism; chlorophyll biosynthesis (light-independent). Functionally, component of the dark-operative protochlorophyllide reductase (DPOR) that uses Mg-ATP and reduced ferredoxin to reduce ring D of protochlorophyllide (Pchlide) to form chlorophyllide a (Chlide). This reaction is light-independent. The NB-protein (ChlN-ChlB) is the catalytic component of the complex. The sequence is that of Light-independent protochlorophyllide reductase subunit B from Chlorokybus atmophyticus (Soil alga).